Consider the following 259-residue polypeptide: Complement factor D (259 aa).

The first 21 residues, 1–21, serve as a signal peptide directing secretion; the sequence is MADRSLHLVVLILLGTALCAA. The propeptide at 22 to 26 is activation peptide; the sequence is QPRGR. A Peptidase S1 domain is found at 27-254; it reads ILRGQEAPSH…YVAWIDGVMA (228 aa). Residues Cys-52 and Cys-68 are joined by a disulfide bond. Active-site charge relay system residues include His-67 and Asp-115. 3 disulfides stabilise this stretch: Cys-149–Cys-215, Cys-180–Cys-196, and Cys-205–Cys-230. Ser-209 acts as the Charge relay system in catalysis. The tract at residues 224-228 is self-inhibitor loop; sequence TSGSR.

It belongs to the peptidase S1 family. CFD is activated by the removal of 5 residues at the N-terminus, named activation peptide, by the MASP-3 isoform of MASP1.

Its subcellular location is the secreted. The catalysed reaction is Selective cleavage of Arg-|-Lys bond in complement factor B when in complex with complement subcomponent C3b or with cobra venom factor.. Circulates in plasma in a mature but self-inhibited form. Activated by factor B (CFB), which displaces the self-inhibition loop. Associates with CFB complexed with complement C3b. Functionally, serine protease that initiates the alternative pathway of the complement system, a cascade of proteins that leads to phagocytosis and breakdown of pathogens and signaling that strengthens the adaptive immune system. In contrast to other complement pathways (classical, lectin and GZMK) that are directly activated by pathogens or antigen-antibody complexes, the alternative complement pathway is initiated by the spontaneous hydrolysis of complement C3. The alternative complement pathway acts as an amplification loop that enhances complement activation by mediating the formation of C3 and C5 convertases. Activated CFD cleaves factor B (CFB) when the latter is complexed with complement C3b, activating the C3 convertase of the alternative pathway. In Bos taurus (Bovine), this protein is Complement factor D (CFD).